A 253-amino-acid chain; its full sequence is MEALAVDGLPEIHEGDDLAALLEDRVDFADGDVLCVASTIVSKAEGRAFDRESFPPSDRAKAIADRLSTITGEQKDPRFAQAVLEESEELLTESPFLLSVTRFGHITVNAGIDRSNVPGADLLLLPEDPTASAERLSSALGVPVVVTDTSGRPFRYGQRGVAVGWAGLPAARDWRGETDRDGRELGVTVQAVVDELAATANLVAGEGDDGTPAVVVREWSFGDHDGSDLLFRREEDDIVREALRQWTFDGHQQ.

Residues 9–12, 38–39, and Lys43 contribute to the GTP site; these read LPEI and ST. Asp113 provides a ligand contact to a divalent metal cation. Asn116 lines the GTP pocket. Residues Asp148, Thr149, and Glu206 each coordinate a divalent metal cation. 204-211 is a binding site for GTP; it reads AGEGDDGT.

This sequence belongs to the CofE family. In terms of assembly, homodimer. Mg(2+) serves as cofactor. It depends on Mn(2+) as a cofactor. The cofactor is K(+).

It catalyses the reaction oxidized coenzyme F420-0 + GTP + L-glutamate = oxidized coenzyme F420-1 + GDP + phosphate + H(+). It carries out the reaction oxidized coenzyme F420-1 + GTP + L-glutamate = oxidized coenzyme F420-2 + GDP + phosphate + H(+). Its pathway is cofactor biosynthesis; coenzyme F420 biosynthesis. In terms of biological role, catalyzes the GTP-dependent successive addition of two or more gamma-linked L-glutamates to the L-lactyl phosphodiester of 7,8-didemethyl-8-hydroxy-5-deazariboflavin (F420-0) to form coenzyme F420-0-glutamyl-glutamate (F420-2) or polyglutamated F420 derivatives. The protein is Coenzyme F420:L-glutamate ligase of Natronomonas pharaonis (strain ATCC 35678 / DSM 2160 / CIP 103997 / JCM 8858 / NBRC 14720 / NCIMB 2260 / Gabara) (Halobacterium pharaonis).